The primary structure comprises 308 residues: Elongation factor Ts (308 aa).

The tract at residues 80–83 (TDFV) is involved in Mg(2+) ion dislocation from EF-Tu.

This sequence belongs to the EF-Ts family.

It is found in the cytoplasm. Its function is as follows. Associates with the EF-Tu.GDP complex and induces the exchange of GDP to GTP. It remains bound to the aminoacyl-tRNA.EF-Tu.GTP complex up to the GTP hydrolysis stage on the ribosome. The protein is Elongation factor Ts of Methylobacterium radiotolerans (strain ATCC 27329 / DSM 1819 / JCM 2831 / NBRC 15690 / NCIMB 10815 / 0-1).